The following is a 354-amino-acid chain: Rhodopsin (354 aa).

Topologically, residues 1–36 are extracellular; it reads MNGTEGPNFYIPMSNKTGVVRSPFEYPQYYLAEPWK. Residues Asn2 and Asn15 are each glycosylated (N-linked (GlcNAc...) asparagine). A helical transmembrane segment spans residues 37–61; the sequence is YSILAAYMFLLILLGFPINFMTLYV. Residues 62–73 lie on the Cytoplasmic side of the membrane; the sequence is TIQHKKLRTPLN. A helical membrane pass occupies residues 74-96; it reads YILLNLAFANHFMVLCGFTITLY. Over 97 to 110 the chain is Extracellular; that stretch reads TSLHGYFVFGQSGC. The cysteines at positions 110 and 187 are disulfide-linked. Residues 111 to 133 form a helical membrane-spanning segment; it reads YFEGFFATLGGEIALWSLVALAI. The 'Ionic lock' involved in activated form stabilization signature appears at 134-136; sequence ERY. Topologically, residues 134–152 are cytoplasmic; the sequence is ERYIVVCKPMSNFRFGENH. Residues 153-173 traverse the membrane as a helical segment; it reads AMMGVAFTWIMALACAVPPLF. Residues 174-202 are Extracellular-facing; the sequence is GWSRYIPEGMQCSCGVDYYTLKPEINNES. Residues 203 to 224 traverse the membrane as a helical segment; the sequence is FVIYMFVVHFLIPLIIITFCYG. The Cytoplasmic segment spans residues 225–252; the sequence is RLVCTVKEAAAQQQESATTQKAEKEVTR. A helical membrane pass occupies residues 253–274; that stretch reads MVIIMVIFFLICWVPYAYVAFY. Residues 275–286 are Extracellular-facing; sequence IFCNQGSEFGPI. Residues 287-308 form a helical membrane-spanning segment; it reads FMTVPAFFAKSSAIYNPVIYIM. At Lys296 the chain carries N6-(retinylidene)lysine. At 309–354 the chain is on the cytoplasmic side; sequence LNKQFRNCMITTLCCGKNPFGDDDASSAATSKTEATSVSTSQVSPA. S-palmitoyl cysteine attachment occurs at residues Cys322 and Cys323. The tract at residues 332–354 is disordered; the sequence is DASSAATSKTEATSVSTSQVSPA. Residues 334–354 are compositionally biased toward low complexity; that stretch reads SSAATSKTEATSVSTSQVSPA.

It belongs to the G-protein coupled receptor 1 family. Opsin subfamily. Contains one covalently linked retinal chromophore. Upon light absorption, the covalently bound 11-cis-retinal is converted to all-trans-retinal. After hydrolysis of the Schiff base and release of the covalently bound all-trans-retinal, active rhodopsin is regenerated by binding of a fresh molecule of 11-cis-retinal.

The protein localises to the membrane. It is found in the cell projection. It localises to the cilium. Its subcellular location is the photoreceptor outer segment. Photoreceptor required for image-forming vision at low light intensity. Required for photoreceptor cell viability after birth. Light-induced isomerization of 11-cis to all-trans retinal triggers a conformational change that activates signaling via G-proteins. Subsequent receptor phosphorylation mediates displacement of the bound G-protein alpha subunit by arrestin and terminates signaling. This is Rhodopsin (RHO) from Rana temporaria (European common frog).